A 625-amino-acid polypeptide reads, in one-letter code: Chaperone protein HtpG (625 aa).

Residues methionine 1–arginine 337 are a; substrate-binding. Residues glutamate 338–lysine 554 are b. Positions leucine 555–glycine 625 are c.

The protein belongs to the heat shock protein 90 family. As to quaternary structure, homodimer.

The protein localises to the cytoplasm. Molecular chaperone. Has ATPase activity. The polypeptide is Chaperone protein HtpG (Actinobacillus pleuropneumoniae serotype 3 (strain JL03)).